Here is a 197-residue protein sequence, read N- to C-terminus: Thymidine kinase (197 aa).

Residues 15–22 (GPMFAGKT) and 93–96 (DEVQ) contribute to the ATP site. The active-site Proton acceptor is glutamate 94. Residues cysteine 150, cysteine 153, cysteine 188, and histidine 191 each coordinate Zn(2+).

Belongs to the thymidine kinase family. In terms of assembly, homotetramer.

The protein resides in the cytoplasm. The enzyme catalyses thymidine + ATP = dTMP + ADP + H(+). This chain is Thymidine kinase, found in Thermococcus kodakarensis (strain ATCC BAA-918 / JCM 12380 / KOD1) (Pyrococcus kodakaraensis (strain KOD1)).